The sequence spans 188 residues: ATP synthase subunit b (188 aa).

A helical transmembrane segment spans residues 7 to 26 (TAAAGAMTLFFASMAYASGD).

It belongs to the ATPase B chain family. As to quaternary structure, F-type ATPases have 2 components, F(1) - the catalytic core - and F(0) - the membrane proton channel. F(1) has five subunits: alpha(3), beta(3), gamma(1), delta(1), epsilon(1). F(0) has three main subunits: a(1), b(2) and c(10-14). The alpha and beta chains form an alternating ring which encloses part of the gamma chain. F(1) is attached to F(0) by a central stalk formed by the gamma and epsilon chains, while a peripheral stalk is formed by the delta and b chains.

Its subcellular location is the cell inner membrane. Functionally, f(1)F(0) ATP synthase produces ATP from ADP in the presence of a proton or sodium gradient. F-type ATPases consist of two structural domains, F(1) containing the extramembraneous catalytic core and F(0) containing the membrane proton channel, linked together by a central stalk and a peripheral stalk. During catalysis, ATP synthesis in the catalytic domain of F(1) is coupled via a rotary mechanism of the central stalk subunits to proton translocation. In terms of biological role, component of the F(0) channel, it forms part of the peripheral stalk, linking F(1) to F(0). The chain is ATP synthase subunit b from Nitratidesulfovibrio vulgaris (strain DP4) (Desulfovibrio vulgaris).